The chain runs to 140 residues: Transmembrane protein 234 homolog (140 aa).

4 consecutive transmembrane segments (helical) span residues 14-34, 64-84, 88-108, and 116-136; these read IYAV…NPFI, WQYL…VLTL, ELSL…AITA, and SGWK…ICGL.

Belongs to the TMEM234 family.

The protein resides in the membrane. The sequence is that of Transmembrane protein 234 homolog from Anopheles gambiae (African malaria mosquito).